Consider the following 215-residue polypeptide: tRNA (guanine-N(7)-)-methyltransferase (215 aa).

E43, E68, D95, and D117 together coordinate S-adenosyl-L-methionine. D117 is an active-site residue. Substrate-binding positions include K121, D153, and 190-193 (TEYE).

The protein belongs to the class I-like SAM-binding methyltransferase superfamily. TrmB family.

The catalysed reaction is guanosine(46) in tRNA + S-adenosyl-L-methionine = N(7)-methylguanosine(46) in tRNA + S-adenosyl-L-homocysteine. It functions in the pathway tRNA modification; N(7)-methylguanine-tRNA biosynthesis. In terms of biological role, catalyzes the formation of N(7)-methylguanine at position 46 (m7G46) in tRNA. The protein is tRNA (guanine-N(7)-)-methyltransferase of Staphylococcus epidermidis (strain ATCC 35984 / DSM 28319 / BCRC 17069 / CCUG 31568 / BM 3577 / RP62A).